The primary structure comprises 262 residues: Acyl-[acyl-carrier-protein]--UDP-N-acetylglucosamine O-acyltransferase (262 aa).

This sequence belongs to the transferase hexapeptide repeat family. LpxA subfamily. In terms of assembly, homotrimer.

It localises to the cytoplasm. The catalysed reaction is a (3R)-hydroxyacyl-[ACP] + UDP-N-acetyl-alpha-D-glucosamine = a UDP-3-O-[(3R)-3-hydroxyacyl]-N-acetyl-alpha-D-glucosamine + holo-[ACP]. It functions in the pathway glycolipid biosynthesis; lipid IV(A) biosynthesis; lipid IV(A) from (3R)-3-hydroxytetradecanoyl-[acyl-carrier-protein] and UDP-N-acetyl-alpha-D-glucosamine: step 1/6. Functionally, involved in the biosynthesis of lipid A, a phosphorylated glycolipid that anchors the lipopolysaccharide to the outer membrane of the cell. This chain is Acyl-[acyl-carrier-protein]--UDP-N-acetylglucosamine O-acyltransferase, found in Photorhabdus laumondii subsp. laumondii (strain DSM 15139 / CIP 105565 / TT01) (Photorhabdus luminescens subsp. laumondii).